The primary structure comprises 184 residues: Peptide deformylase (184 aa).

Cysteine 99 and histidine 141 together coordinate Fe cation. Glutamate 142 is an active-site residue. Fe cation is bound at residue histidine 145.

The protein belongs to the polypeptide deformylase family. The cofactor is Fe(2+).

The enzyme catalyses N-terminal N-formyl-L-methionyl-[peptide] + H2O = N-terminal L-methionyl-[peptide] + formate. Functionally, removes the formyl group from the N-terminal Met of newly synthesized proteins. Requires at least a dipeptide for an efficient rate of reaction. N-terminal L-methionine is a prerequisite for activity but the enzyme has broad specificity at other positions. The chain is Peptide deformylase from Chlamydia abortus (strain DSM 27085 / S26/3) (Chlamydophila abortus).